We begin with the raw amino-acid sequence, 156 residues long: Small ribosomal subunit protein uS7 (156 aa).

This sequence belongs to the universal ribosomal protein uS7 family. Part of the 30S ribosomal subunit. Contacts proteins S9 and S11.

Functionally, one of the primary rRNA binding proteins, it binds directly to 16S rRNA where it nucleates assembly of the head domain of the 30S subunit. Is located at the subunit interface close to the decoding center, probably blocks exit of the E-site tRNA. This is Small ribosomal subunit protein uS7 from Bradyrhizobium diazoefficiens (strain JCM 10833 / BCRC 13528 / IAM 13628 / NBRC 14792 / USDA 110).